Reading from the N-terminus, the 1057-residue chain is Exportin-1 (1057 aa).

The 67-residue stretch at 36–102 folds into the Importin N-terminal domain; sequence AQMVLGKFQE…KNYIVSLIIR (67 aa). HEAT repeat units follow at residues 239-275, 281-321, 462-501, 506-544, 551-588, 596-633, 739-776, 781-818, 855-892, 902-925, and 926-965; these read AEPS…LNLG, AVFI…FIHT, NTQH…AQNK, RFLV…QYPR, KFLK…QCKR, EESQ…YMIA, KETL…DYRT, TRDP…TTLS, QQFK…NVSK, KTYL…KSGF, and ALEC…YVKE.

The protein belongs to the exportin family. Component of a nuclear export receptor complex.

Its subcellular location is the nucleus. The protein localises to the cytoplasm. The protein resides in the perinuclear region. Functionally, mediates the nuclear export of cellular proteins (cargos) bearing a leucine-rich nuclear export signal (NES). This chain is Exportin-1 (xpo1), found in Dictyostelium discoideum (Social amoeba).